A 160-amino-acid polypeptide reads, in one-letter code: SsrA-binding protein (160 aa).

Positions 136-160 (KRHVEKERDANREVQRAMRSKGKDD) are disordered.

Belongs to the SmpB family.

Its subcellular location is the cytoplasm. Functionally, required for rescue of stalled ribosomes mediated by trans-translation. Binds to transfer-messenger RNA (tmRNA), required for stable association of tmRNA with ribosomes. tmRNA and SmpB together mimic tRNA shape, replacing the anticodon stem-loop with SmpB. tmRNA is encoded by the ssrA gene; the 2 termini fold to resemble tRNA(Ala) and it encodes a 'tag peptide', a short internal open reading frame. During trans-translation Ala-aminoacylated tmRNA acts like a tRNA, entering the A-site of stalled ribosomes, displacing the stalled mRNA. The ribosome then switches to translate the ORF on the tmRNA; the nascent peptide is terminated with the 'tag peptide' encoded by the tmRNA and targeted for degradation. The ribosome is freed to recommence translation, which seems to be the essential function of trans-translation. The protein is SsrA-binding protein of Ectopseudomonas mendocina (strain ymp) (Pseudomonas mendocina).